An 807-amino-acid polypeptide reads, in one-letter code: MRLSPAPLKLSRTPALLALALPLAAALAFSDETLDKVPKSEGYCSRILRAQGTRREGYTEFSLRVEGDPDFYKPGTSYRVTLSAAPPSYFRGFTLIALRENREGDKEEDHAGTFQIIDEEETQFMSNCPVAVTESTPRRRTRIQVFWIAPPAGTGCVILKASIVQKRIIYFQDEGSLTKKLCEQDSTFDGVTDKPILDCCACGTAKYRLTFYGNWSEKTHPKDYPRRANHWSAIIGGSHSKNYVLWEYGGYASEGVKQVAELGSPVKMEEEIRQQSDEVLTVIKAKAQWPAWQPLNVRAAPSAEFSVDRTRHLMSFLTMMGPSPDWNVGLSAEDLCTKECGWVQKVVQDLIPWDAGTDSGVTYESPNKPTIPQEKIRPLTSLDHPQSPFYDPEGGSITQVARVVIERIARKGEQCNIVPDNVDDIVADLAPEEKDEDDTPETCIYSNWSPWSACSSSTCDKGKRMRQRMLKAQLDLSVPCPDTQDFQPCMGPGCSDEDGSTCTMSEWITWSPCSISCGMGMRSRERYVKQFPEDGSVCTLPTEETEKCTVNEECSPSSCLMTEWGEWDECSATCGMGMKKRHRMIKMNPADGSMCKAETSQAEKCMMPECHTIPCLLSPWSEWSDCSVTCGKGMRTRQRMLKSLAELGDCNEDLEQVEKCMLPECPIDCELTEWSQWSECNKSCGKGHVIRTRMIQMEPQFGGAPCPETVQRKKCRIRKCLRNPSIQKLRWREARESRRSEQLKEESEGEQFPGCRMRPWTAWSECTKLCGGGIQERYMTVKKRFKSSQFTSCKDKKEIRACNVHPC.

The signal sequence occupies residues 1–28 (MRLSPAPLKLSRTPALLALALPLAAALA). The region spanning 29–194 (FSDETLDKVP…DSTFDGVTDK (166 aa)) is the Reelin domain. 17 disulfides stabilise this stretch: C44–C128, C156–C182, C199–C336, C200–C340, C202–C415, C443–C480, C454–C489, C459–C494, C502–C538, C513–C517, C548–C554, C559–C595, C570–C574, C605–C610, C615–C650, C626–C630, and C660–C665. A Spondin domain is found at 195–388 (PILDCCACGT…LTSLDHPQSP (194 aa)). N214 is a glycosylation site (N-linked (GlcNAc...) asparagine). The Ca(2+) site is built by D325, D354, and D358. 6 consecutive TSP type-1 domains span residues 442-495 (TCIY…PGCS), 501-555 (TCTM…EECS), 558-611 (SCLM…PECH), 614-666 (PCLL…PECP), 668-721 (DCEL…RKCL), and 754-806 (GCRM…NVHP). C-linked (Man) tryptophan glycosylation occurs at W448. C-linked (Man) tryptophan; partial glycosylation occurs at W451. C-linked (Man) tryptophan glycosylation occurs at W507. W510 is a glycosylation site (C-linked (Man) tryptophan; partial). W564 carries a C-linked (Man) tryptophan glycan. A glycan (C-linked (Man) tryptophan; partial) is linked at W620. The C-linked (Man) tryptophan glycan is linked to W623. The C-linked (Man) tryptophan glycan is linked to W674. N-linked (GlcNAc...) asparagine glycosylation occurs at N681.

In terms of assembly, binds to the central extracellular domain of APP and inhibits beta-secretase cleavage of APP. In terms of tissue distribution, highest expression in lung, lower expression in brain, heart, kidney, liver and testis, and lowest expression in pancreas, skeletal muscle and ovary. Not expressed in spleen.

Its subcellular location is the secreted. It localises to the extracellular space. It is found in the extracellular matrix. Cell adhesion protein that promotes the attachment of spinal cord and sensory neuron cells and the outgrowth of neurites in vitro. May contribute to the growth and guidance of axons in both the spinal cord and the PNS. Major factor for vascular smooth muscle cell. This Homo sapiens (Human) protein is Spondin-1 (SPON1).